The following is a 268-amino-acid chain: Putative ABC transporter ATP-binding protein LMOf2365_1216 (268 aa).

The region spanning 2–237 (LKTEHISFQY…KSNVEQAGLV (236 aa)) is the ABC transporter domain. Residue 35–42 (GANGSGKS) coordinates ATP.

It belongs to the ABC transporter superfamily.

The protein localises to the cell membrane. Its function is as follows. Probably part of an ABC transporter complex. Responsible for energy coupling to the transport system. This Listeria monocytogenes serotype 4b (strain F2365) protein is Putative ABC transporter ATP-binding protein LMOf2365_1216.